Reading from the N-terminus, the 710-residue chain is Nucleolin (710 aa).

A disordered region spans residues 1–303 (MVKLAKAGKN…KKQKVEGTEP (303 aa)). N6-acetyllysine is present on residues Lys9, Lys15, and Lys16. Residues 24 to 43 (VEEDSEDEEMSEDEEDDSSG) are compositionally biased toward acidic residues. Residues Ser28, Ser34, Ser41, and Ser42 each carry the phosphoserine modification. The span at 56–107 (AAATSAKKVVVSPTKKVAVATPAKKAAVTPGKKAAATPAKKTVTPAKAVTTP) shows a compositional bias: low complexity. The stretch at 58-65 (ATSAKKVV) is repeat 1. The segment at 58 to 135 (ATSAKKVVVS…GAAIPAKGAK (78 aa)) is 8 X 8 AA tandem repeats of X-T-P-X-K-K-X-X. Ser67 is modified (phosphoserine). A phosphothreonine mark is found at Thr69, Thr76, Thr84, and Thr92. 3 repeat units span residues 75-82 (ATPAKKAA), 83-90 (VTPGKKAA), and 91-98 (ATPAKKTV). The residue at position 96 (Lys96) is an N6-acetyllysine. Thr99 bears the Phosphothreonine mark. Residues 99–104 (TPAKAV) form a 5; truncated repeat. Lys102 bears the N6-acetyllysine mark. The stretch at 105–112 (TTPGKKGA) is repeat 6. Residue Thr106 is modified to Phosphothreonine. The residue at position 109 (Lys109) is an N6-acetyllysine. Thr113 bears the Phosphothreonine mark. Lys116 is subject to N6-acetyllysine. 2 repeat units span residues 120–127 (ATPGKKGA) and 128–135 (AIPAKGAK). Phosphothreonine is present on Thr121. Residues 122–137 (PGKKGAAIPAKGAKNG) are compositionally biased toward low complexity. Lys124 carries the post-translational modification N6-acetyllysine. A phosphoserine mark is found at Ser145 and Ser153. Positions 145-171 (SDEEEDDDSEEDEEDDEDEDEDEDEIE) are enriched in acidic residues. Residues 172 to 183 (PAAMKAAAAAPA) show a composition bias toward low complexity. A phosphoserine mark is found at Ser184 and Ser206. The segment covering 184–211 (SEDEDDEDDEDDEDDDDDEEDDSEEEAM) has biased composition (acidic residues). A Phosphothreonine modification is found at Thr214. Residues 234 to 272 (EDEDEEEDDEDEDDDDDEDDEDDDDEDDEEEEEEEEEEP) show a composition bias toward acidic residues. Positions 273-300 (VKEAPGKRKKEMAKQKAAPEAKKQKVEG) are enriched in basic and acidic residues. Residue Lys297 forms a Glycyl lysine isopeptide (Lys-Gly) (interchain with G-Cter in SUMO1); alternate linkage. Residue Lys297 forms a Glycyl lysine isopeptide (Lys-Gly) (interchain with G-Cter in SUMO2); alternate linkage. Thr301 is subject to Phosphothreonine. RRM domains lie at 307–383 (FNLF…KPKG) and 393–466 (RTLL…YTGE). Lys318 bears the N6-acetyllysine mark. Lys324 is covalently cross-linked (Glycyl lysine isopeptide (Lys-Gly) (interchain with G-Cter in SUMO1); alternate). Residue Lys324 forms a Glycyl lysine isopeptide (Lys-Gly) (interchain with G-Cter in SUMO2); alternate linkage. N6-acetyllysine is present on Lys348. Residue Ser356 is modified to Phosphoserine. Thr367 is modified (phosphothreonine). Residue Lys370 forms a Glycyl lysine isopeptide (Lys-Gly) (interchain with G-Cter in SUMO2) linkage. Residue Lys377 forms a Glycyl lysine isopeptide (Lys-Gly) (interchain with G-Cter in SUMO2); alternate linkage. An N6-acetyllysine; alternate modification is found at Lys377. Residues Lys398 and Lys403 each carry the N6-acetyllysine modification. Thr405 bears the Phosphothreonine mark. An N6-acetyllysine mark is found at Lys427 and Lys444. Phosphoserine is present on residues Ser458 and Ser460. N6-acetyllysine is present on residues Lys467 and Lys477. An RRM 3 domain is found at 486–560 (KTLVLSNLSY…RAIRLELQGP (75 aa)). Lys513 participates in a covalent cross-link: Glycyl lysine isopeptide (Lys-Gly) (interchain with G-Cter in SUMO2); alternate. N6-acetyllysine; alternate is present on Lys513. Lys521 is modified (N6-acetyllysine). Phosphoserine is present on Ser563. An N6-acetyllysine modification is found at Lys572. An RRM 4 domain is found at 572-647 (KTLFVKGLSE…NKVTLDWAKP (76 aa)). Lys577 participates in a covalent cross-link: Glycyl lysine isopeptide (Lys-Gly) (interchain with G-Cter in SUMO2); alternate. Lys577 bears the N6-acetyllysine; alternate mark. At Ser580 the chain carries Phosphoserine. Residue Lys589 forms a Glycyl lysine isopeptide (Lys-Gly) (interchain with G-Cter in SUMO1); alternate linkage. A Glycyl lysine isopeptide (Lys-Gly) (interchain with G-Cter in SUMO2); alternate cross-link involves residue Lys589. Residues Ser591 and Ser619 each carry the phosphoserine modification. Residue Lys624 forms a Glycyl lysine isopeptide (Lys-Gly) (interchain with G-Cter in SUMO2) linkage. The disordered stretch occupies residues 640–710 (VTLDWAKPKG…KPQGKKTKFE (71 aa)). Lys646 bears the N6-acetyllysine mark. A compositionally biased stretch (gly residues) spans 650 to 696 (EGGFGGRGGGRGGFGGRGGGRGGRGGFGGRGRGGFGGRGGFRGGRGG). Asymmetric dimethylarginine occurs at positions 656, 660, 666, 670, 673, 679, 681, 687, and 691. An Asymmetric dimethylarginine; alternate modification is found at Arg694. Arg694 is subject to Omega-N-methylarginine; alternate. Basic and acidic residues predominate over residues 697–710 (GGDHKPQGKKTKFE).

In terms of assembly, identified in a IGF2BP1-dependent mRNP granule complex containing untranslated mRNAs. Component of the SWAP complex that consists of NPM1, NCL/nucleolin, PARP1 and SWAP70. Component of a complex which is at least composed of HTATSF1/Tat-SF1, the P-TEFb complex components CDK9 and CCNT1, RNA polymerase II, SUPT5H, and NCL/nucleolin. Interacts with AICDA. Interacts with APTX. Interacts with C1QBP. Interacts with ERBB4. Interacts (via C-terminus) with FMR1 isoform 6 (via N-terminus). Interacts with GZF1; this interaction is important for nucleolar localization of GZF1. Interacts with NSUN2. Interacts with NVL. Interacts (via N-terminus domain) with SETX. Interacts (via RRM1 and C-terminal RRM4/Arg/Gly-rich domains) with TERT; the interaction is important for nucleolar localization of TERT. Interacts with WDR46. Interacts with ZFP36. Interacts with LRRC34. Interacts with RRP1B. Interacts with HNRNPU; this interaction occurs during mitosis. Interacts with RIOK1; RIOK1 recruits NCL to PRMT5 for symmetrically methylation. Interacts with ZBTB7B. Interacts with MDK; this interaction promotes NCL clustering and lateral movements of this complex into lipid rafts leading to MDK internalization. Interacts with HDGF (isoform 1). Interacts with ALKBH2. Interacts with IGFBP5; this interaction is necessary for IGFBP5 localization to the nucleus. Interacts with DDX24 (when ubiquitinated); this interaction may be important during ribosome biogenesis. Post-translationally, some glutamate residues are glycylated by TTLL8. This modification occurs exclusively on glutamate residues and results in a glycine chain on the gamma-carboxyl group. In terms of processing, symmetrically methylated by PRMT5.

It is found in the nucleus. The protein resides in the nucleolus. Its subcellular location is the cytoplasm. In terms of biological role, nucleolin is the major nucleolar protein of growing eukaryotic cells. It is found associated with intranucleolar chromatin and pre-ribosomal particles. It induces chromatin decondensation by binding to histone H1. It is thought to play a role in pre-rRNA transcription and ribosome assembly. May play a role in the process of transcriptional elongation. Binds RNA oligonucleotides with 5'-UUAGGG-3' repeats more tightly than the telomeric single-stranded DNA 5'-TTAGGG-3' repeats. This Homo sapiens (Human) protein is Nucleolin (NCL).